A 120-amino-acid polypeptide reads, in one-letter code: MRLIFGALIISLTYMYYYEVHGTELRCKCLDGKKLPPKTIMLGNFWFHRESGGPRCNNNEYFLYLGGGKKHGPGVCLSPHHPFSKWLDKRNDNRWYNVNVTRQPERGPGKITVTLVGLKE.

The protein belongs to the intercrine alpha (chemokine CxC) family. Interacts with host CXCR1 and CXCR2.

Its function is as follows. Acts as a functional chemokine, inducing calcium mobilization, chemotaxis, and degranulation of neutrophils. Contributes to the induction of neutrophil chemotaxis by interacting with host CXCR1 and CXCR2 receptors. The chain is Chemokine vCXCL1 (UL146) from Human cytomegalovirus (strain Merlin) (HHV-5).